The chain runs to 840 residues: Probable sulfate permease C869.05c (840 aa).

The next 12 helical transmembrane spans lie at 120 to 140 (WLINDLIAGITVGCVVVPQGM), 148 to 168 (LPSEYGLYSSFVGVAIYCFFA), 173 to 193 (VSIGPVAVMSLITAKVIANVM), 208 to 228 (LALLAGAITCGIGLLRLGFII), 230 to 250 (FIPVPAVAGFTTGSALNILSG), 278 to 298 (LPDTTVDAAFGLVSLFILFFT), 315 to 335 (AFFLTNTLRSAVVVIVGTAIS), 410 to 430 (LIAMGVTNLIGIFFNAYPATG), 447 to 467 (IAGIFTAAVVILSLYCLTDAF), 470 to 490 (IPNAILSAVIIHAVTDLILPM), 505 to 525 (CIFFISVIVSVFSSIENGIYV), and 527 to 547 (VCLAAALLLLRIAKPHGSFLG). The region spanning 578 to 733 (NLEIQSPPPG…CVEVAAPLRD (156 aa)) is the STAS domain. At S823 the chain carries Phosphoserine.

The protein belongs to the SLC26A/SulP transporter (TC 2.A.53) family.

The protein localises to the membrane. Its function is as follows. High affinity uptake of sulfate into the cell. In Schizosaccharomyces pombe (strain 972 / ATCC 24843) (Fission yeast), this protein is Probable sulfate permease C869.05c.